Reading from the N-terminus, the 244-residue chain is MIRTDAKDGALVLFSGGQDSATCVAWALERYQTVETLGFDYGQRHRVELECREGVREALKRDFPAWSDRLGDDHMIDLSVLGAISDTAMTRTIEIETAANGLPNTFVPGRNLMFMTIAAAIAYRRGLRVLVGGMCETDFSGYPDCRDDTMKALQVALNLGMDTRVVLETPLMWLDKAQTWQLAEQLGGEALVELIRVETHTCYVGERAELHDWGFGCGECPACKLRKRGYEAYLKGERVTEAPL.

14–24 (FSGGQDSATCV) lines the ATP pocket. Zn(2+)-binding residues include C202, C217, C220, and C223.

It belongs to the QueC family. It depends on Zn(2+) as a cofactor.

The catalysed reaction is 7-carboxy-7-deazaguanine + NH4(+) + ATP = 7-cyano-7-deazaguanine + ADP + phosphate + H2O + H(+). The protein operates within purine metabolism; 7-cyano-7-deazaguanine biosynthesis. In terms of biological role, catalyzes the ATP-dependent conversion of 7-carboxy-7-deazaguanine (CDG) to 7-cyano-7-deazaguanine (preQ(0)). This chain is 7-cyano-7-deazaguanine synthase, found in Burkholderia lata (strain ATCC 17760 / DSM 23089 / LMG 22485 / NCIMB 9086 / R18194 / 383).